The chain runs to 510 residues: Protein disulfide-isomerase (510 aa).

The signal sequence occupies residues Met1 to Gly20. The Thioredoxin 1 domain occupies His27–Gly136. Active-site nucleophile residues include Cys55 and Cys58. The cysteines at positions 55 and 58 are disulfide-linked. Residue Lys202 is modified to N6-acetyllysine. N6-succinyllysine occurs at positions 224 and 273. A phosphoserine mark is found at Ser333 and Ser359. Residues Gly351–Gln477 enclose the Thioredoxin 2 domain. Residues Cys399 and Cys402 each act as nucleophile in the active site. Cys399 and Cys402 form a disulfide bridge. At Ser429 the chain carries Phosphoserine. The tract at residues Glu473 to Leu510 is disordered. Positions Ala480–Asp502 are enriched in acidic residues. The short motif at Lys507–Leu510 is the Prevents secretion from ER element.

This sequence belongs to the protein disulfide isomerase family. Heterodimer; heterodimerizes with the protein microsomal triglyceride transfer MTTP. Homodimer. Monomers and homotetramers may also occur. Interacts with P4HA2, forming a heterotetramer consisting of 2 alpha subunits (P4HA2) and 2 beta (P4HB), where P4HB plays the role of a structural subunit; this tetramer catalyzes the formation of 4-hydroxyproline in collagen. Also constitutes the structural subunit of the microsomal triacylglycerol transfer protein MTTP in mammalian cells. Stabilizes both enzymes and retain them in the ER without contributing to the catalytic activity. Binds UBQLN1. Interacts with ERO1B. Interacts with ILDR2. Interacts with ERN1/IRE1A (via N-terminus); the interaction is enhanced by phosphorylation of P4HB by FAM20C in response to endoplasmic reticulum stress and results in attenuation of ERN1 activity. Post-translationally, phosphorylation of Ser-359 by FAM20C is induced by endoplasmic reticulum stress and results in a functional switch from oxidoreductase to molecular chaperone. It also promotes interaction with ERN1.

It localises to the endoplasmic reticulum. Its subcellular location is the endoplasmic reticulum lumen. It is found in the melanosome. The protein resides in the cell membrane. It catalyses the reaction Catalyzes the rearrangement of -S-S- bonds in proteins.. In terms of biological role, this multifunctional protein catalyzes the formation, breakage and rearrangement of disulfide bonds. At the cell surface, seems to act as a reductase that cleaves disulfide bonds of proteins attached to the cell. May therefore cause structural modifications of exofacial proteins. Inside the cell, seems to form/rearrange disulfide bonds of nascent proteins. At high concentrations and following phosphorylation by FAM20C, functions as a chaperone that inhibits aggregation of misfolded proteins. At low concentrations, facilitates aggregation (anti-chaperone activity). May be involved with other chaperones in the structural modification of the TG precursor in hormone biogenesis. Also acts as a structural subunit of various enzymes such as prolyl 4-hydroxylase and microsomal triacylglycerol transfer protein MTTP. Receptor for LGALS9; the interaction retains P4HB at the cell surface of Th2 T helper cells, increasing disulfide reductase activity at the plasma membrane, altering the plasma membrane redox state and enhancing cell migration. This Bos taurus (Bovine) protein is Protein disulfide-isomerase (P4HB).